The chain runs to 251 residues: Triosephosphate isomerase (251 aa).

9 to 11 (NWK) is a binding site for substrate. H95 functions as the Electrophile in the catalytic mechanism. The Proton acceptor role is filled by E167. Substrate is bound by residues G173, S212, and 233 to 234 (GG).

This sequence belongs to the triosephosphate isomerase family. As to quaternary structure, homodimer.

The protein localises to the cytoplasm. It carries out the reaction D-glyceraldehyde 3-phosphate = dihydroxyacetone phosphate. The protein operates within carbohydrate biosynthesis; gluconeogenesis. It participates in carbohydrate degradation; glycolysis; D-glyceraldehyde 3-phosphate from glycerone phosphate: step 1/1. Functionally, involved in the gluconeogenesis. Catalyzes stereospecifically the conversion of dihydroxyacetone phosphate (DHAP) to D-glyceraldehyde-3-phosphate (G3P). In Pseudomonas syringae pv. syringae (strain B728a), this protein is Triosephosphate isomerase.